Here is a 504-residue protein sequence, read N- to C-terminus: MTLYLDGETLTIEYIKSFLQQQSKIEIIDDALERVKKSRAVVERIIENEETVYGITTGFGLFSDVRIDPTQYNELQMNLIRSHACGLGEPFSKEVALVMMILRLNTLLKGHSGATLELVRQLQFFINERIIPIIPQQGSLGASGDLAPLSHLALALIGEGKVLYRGEEKDSDDVLRELNRQPLNLQAKEGLALINGTQAMTAQGVISYIEAEDLGYQSEWIAALTHQSLNGIIDAYRHDVHAVRNFQEQINVAARMRDWLEGSTLTTRQAEIRVQDAYTLRCIPQIHGASFQVFNYVKQQLEFEMNAANDNPLIFEEANATFVISGGNFHGQPIAFALDHLKLGVSELANVSERRLERLVNPQLNGDLPAFLSPEPGLQSGAMIMQYAAASLVSENKTLAHPASVDSITSSANQEDHVSMGTTAARHGYQIIENARRVLAIECVIALQAAELKGVEGLSPKTRRKYDEFRSIVPSITYDRQFHKDIEAVAQYLKQSIYQTTACH.

A cross-link (5-imidazolinone (Ala-Gly)) is located at residues 142 to 144; the sequence is ASG. Position 143 is a 2,3-didehydroalanine (Ser) (Ser-143).

Belongs to the PAL/histidase family. Post-translationally, contains an active site 4-methylidene-imidazol-5-one (MIO), which is formed autocatalytically by cyclization and dehydration of residues Ala-Ser-Gly.

The protein resides in the cytoplasm. It carries out the reaction L-histidine = trans-urocanate + NH4(+). Its pathway is amino-acid degradation; L-histidine degradation into L-glutamate; N-formimidoyl-L-glutamate from L-histidine: step 1/3. This is Histidine ammonia-lyase from Staphylococcus aureus (strain MRSA252).